The primary structure comprises 2339 residues: Voltage-dependent N-type calcium channel subunit alpha-1B (2339 aa).

At 1-90 the chain is on the cytoplasmic side; sequence MVRFGDELGG…DNVVRKYAKR (90 aa). The segment covering 15–34 has biased composition (gly residues); it reads AGGAERARGGGAGGAGGPGP. Residues 15–37 are disordered; sequence AGGAERARGGGAGGAGGPGPGGL. The residue at position 22 (arginine 22) is an Omega-N-methylarginine. Residues 82–359 form an I repeat; the sequence is NVVRKYAKRI…LVLGVLSGEF (278 aa). Residues 91–114 form a helical membrane-spanning segment; the sequence is ITEWPPFEYMILATIIANCIVLAL. The Extracellular segment spans residues 115-131; that stretch reads EQHLPDGDKTPMSERLD. A helical transmembrane segment spans residues 132–152; that stretch reads DTEPYFIGIFCFEAGIKILAL. The Cytoplasmic portion of the chain corresponds to 153–163; the sequence is GFVLHKGSYLR. Residues 164-182 form a helical membrane-spanning segment; the sequence is NGWNVMDFVVVLTGILATA. Residues 183-187 are Extracellular-facing; the sequence is GTDFD. A helical transmembrane segment spans residues 188–211; the sequence is LRTLRAVRVLRPLKLVSGIPSLQV. Residues 212–221 are Cytoplasmic-facing; that stretch reads VLKSIMKAMV. Residues 222 to 244 form a helical membrane-spanning segment; it reads PLLQIGLLLFFAILMFAIIGLEF. Residues 245 to 331 are Extracellular-facing; that stretch reads YMGKFHKACF…NTNDAAGNTW (87 aa). Residue asparagine 256 is glycosylated (N-linked (GlcNAc...) asparagine). Residues 332 to 356 form a helical membrane-spanning segment; it reads NWLYFIPLIIIGSFFMLNLVLGVLS. At 357 to 483 the chain is on the cytoplasmic side; the sequence is GEFAKERERV…FFIRRMVKAQ (127 aa). A binding to the beta subunit region spans residues 379–396; it reads QQIERELNGYLEWIFKAE. Serine 411 carries the phosphoserine modification. Residue 452 to 459 coordinates ATP; it reads ASLKSGKT. The II repeat unit spans residues 469-713; the sequence is EKMFRFFIRR…VFLAIAVDNL (245 aa). A helical membrane pass occupies residues 484 to 502; it reads SFYWTVLCVVALNTLCVAM. Residues 503–512 are Extracellular-facing; it reads VHYNQPQRLT. A helical transmembrane segment spans residues 513–535; the sequence is TALYFAEFVFLGLFLTEMSLKMY. Residues 536–545 are Cytoplasmic-facing; it reads GLGPRSYFRS. Serine 545 contacts a 1,2-diacyl-sn-glycero-3-phospho-(1D-myo-inositol-4,5-bisphosphate). A helical transmembrane segment spans residues 546–567; it reads SFNCFDFGVIVGSIFEVVWAAV. Over 568 to 574 the chain is Extracellular; that stretch reads KPGTSFG. Residues 575 to 587 form a helical membrane-spanning segment; that stretch reads ISVLRALRLLRIF. A 1,2-diacyl-sn-glycero-3-phospho-(1D-myo-inositol-4,5-bisphosphate) contacts are provided by arginine 585 and lysine 588. Residues 588 to 605 are Cytoplasmic-facing; sequence KVTKYWNSLRNLVVSLLN. A helical membrane pass occupies residues 606–631; it reads SMKSIISLLFLLFLFIVVFALLGMQL. The Extracellular portion of the chain corresponds to 632-683; it reads FGGQFNFKDETPTTNFDTFPAAILTVFQILTGEDWNAVMYHGIESQGGVSRG. The chain crosses the membrane as a helical span at residues 684–710; that stretch reads MFSSFYFIVLTLFGNYTLLNVFLAIAV. Topologically, residues 711–1156 are cytoplasmic; that stretch reads DNLANAQELT…CCHYIVTMRY (446 aa). Residues serine 746, serine 749, and serine 784 each carry the phosphoserine modification. 5 stretches are compositionally biased toward basic and acidic residues: residues 809-827, 870-891, 927-937, 973-984, and 999-1026; these read DVKT…RDAP, EQDR…EERG, GSPEEAAEREP, CPREAESSEEPA, and TAEK…RNHQ. Disordered stretches follow at residues 809 to 1026 and 1056 to 1084; these read DVKT…RNHQ and VEEQ…TTVH. Over residues 1066 to 1083 the composition is skewed to polar residues; it reads QRNVTRMGSQPPDTSTTV. Position 1074 is a phosphoserine (serine 1074). An III repeat occupies 1142–1424; the sequence is NLLRRCCHYI…IFVALIIITF (283 aa). Residues 1157 to 1175 traverse the membrane as a helical segment; sequence FEMVILVVIALSSIALAAE. Over 1176 to 1183 the chain is Extracellular; the sequence is DPVRTDSP. A helical transmembrane segment spans residues 1184-1208; sequence RNNALKYMDYIFTGVFTFEMVIKMI. Topologically, residues 1209-1222 are cytoplasmic; sequence DLGLLLHPGAYFRD. The helical transmembrane segment at 1223–1243 threads the bilayer; the sequence is LWNILDFIVVSGALVAFAFSG. Residues 1244–1249 are Extracellular-facing; sequence SKGKDI. A helical transmembrane segment spans residues 1250 to 1270; sequence STIKSLRVLRVLRPLKTIKRL. Residues 1271–1288 lie on the Cytoplasmic side of the membrane; sequence PKLKAVFDCVVNSLKNVL. The chain crosses the membrane as a helical span at residues 1289 to 1308; the sequence is NILIVYMLFMFIFAVIAVQL. At 1309 to 1395 the chain is on the extracellular side; that stretch reads FKGKFFYCTD…EQGPSPGYRM (87 aa). A helical membrane pass occupies residues 1396–1421; that stretch reads ELSIFYVVYFVVFPFFFVNIFVALII. At 1422–1476 the chain is on the cytoplasmic side; sequence ITFQEQGDKVMSECSLEKNERACIDFAISARPLTRYMPQNKQSFQYKTWTFVVSP. The stretch at 1461–1714 is one IV repeat; that stretch reads NKQSFQYKTW…LFVAVIMDNF (254 aa). Residues 1477 to 1495 form a helical membrane-spanning segment; that stretch reads PFEYFIMAMIALNTVVLMM. The Extracellular segment spans residues 1496–1503; that stretch reads KFYDAPYE. A helical transmembrane segment spans residues 1504–1528; it reads YELMLKCLNIVFTSMFSMECVLKII. The Cytoplasmic segment spans residues 1529–1538; the sequence is AFGVLNYFRD. The chain crosses the membrane as a helical span at residues 1539–1560; it reads AWNVFDFVTVLGSITDILVTEI. At 1561-1566 the chain is on the extracellular side; that stretch reads ANNFIN. Residue asparagine 1566 is glycosylated (N-linked (GlcNAc...) asparagine). A helical membrane pass occupies residues 1567-1585; sequence LSFLRLFRAARLIKLLRQG. The Cytoplasmic portion of the chain corresponds to 1586–1604; the sequence is YTIRILLWTFVQSFKALPY. A helical transmembrane segment spans residues 1605 to 1624; it reads VCLLIAMLFFIYAIIGMQVF. Residues 1625–1686 lie on the Extracellular side of the membrane; it reads GNIALDDDTS…SNASECGSDF (62 aa). Asparagine 1678 is a glycosylation site (N-linked (GlcNAc...) asparagine). Residues 1687-1710 form a helical membrane-spanning segment; sequence AYFYFVSFIFLCSFLMLNLFVAVI. The Cytoplasmic portion of the chain corresponds to 1711 to 2339; sequence MDNFEYLTRD…CHHPDRDRRC (629 aa). The region spanning 1727 to 1762 is the EF-hand domain; the sequence is HHLDEFIRVWAEYDPAACGRISYSDMFEMLKHMSPP. The Ca(2+) site is built by aspartate 1740, arginine 1746, and aspartate 1751. The interval 1983-2312 is disordered; sequence TLSGPDAEPQ…QPPPLRRVPN (330 aa). Residues 2050-2064 show a composition bias toward basic residues; the sequence is PHHHHHRCHRRRDRK. The residue at position 2067 (serine 2067) is a Phosphoserine. Residues 2099–2136 are compositionally biased toward basic and acidic residues; it reads CRRERERRQERGRSQERRQPSSSSSEKHRFYSCDRFGG. Composition is skewed to polar residues over residues 2144-2155 and 2165-2181; these read PSLSSHPTSPTA and GSGS…SGAS. 3 positions are modified to phosphoserine: serine 2224, serine 2233, and serine 2256. Residues 2286–2302 show a composition bias toward low complexity; it reads SNSGRSSRTSYVSSLTS.

It belongs to the calcium channel alpha-1 subunit (TC 1.A.1.11) family. CACNA1B subfamily. Multisubunit complex consisting of alpha-1, alpha-2, beta and delta subunits in a 1:1:1:1 ratio. The channel activity is directed by the pore-forming and voltage-sensitive alpha-1 subunit. In many cases, this subunit is sufficient to generate voltage-sensitive calcium channel activity. The auxiliary subunits beta and alpha-2/delta linked by a disulfide bridge regulate the channel activity. Interacts with RIMS1. Interacts with FMR1 (via C-terminus); this interaction induces a decrease in the number of presynaptic functional CACNA1B channels at the cell surface. Post-translationally, phosphorylated in vitro by CaM-kinase II, PKA, PKC and CGPK. In terms of tissue distribution, widespread expression throughout the brain. Highest levels in corpus striatum and midbrain.

It is found in the membrane. The enzyme catalyses Ca(2+)(in) = Ca(2+)(out). Is specifically blocked by omega-conotoxin GVIA. Is specifically blocked by omega-conotoxin MVIIA (ziconotide). Is insensitive to dihydropyridines (DHP). Voltage-sensitive calcium channels (VSCC) mediate the entry of calcium ions into excitable cells and are also involved in a variety of calcium-dependent processes, including muscle contraction, hormone or neurotransmitter release, gene expression, cell motility, cell division and cell death. This alpha-1B subunit gives rise to N-type calcium currents. N-type calcium channels belong to the 'high-voltage activated' (HVA) group. They are involved in pain signaling. Calcium channels containing alpha-1B subunit may play a role in directed migration of immature neurons. Mediates Ca(2+) release probability at hippocampal neuronal soma and synaptic terminals. The chain is Voltage-dependent N-type calcium channel subunit alpha-1B (CACNA1B) from Oryctolagus cuniculus (Rabbit).